Consider the following 204-residue polypeptide: Kunitz-type trypsin inhibitor KTI2 (204 aa).

A signal peptide spans 1-25; that stretch reads MKSTIFFALFLVCAFTISYLPSATA. 2 cysteine pairs are disulfide-bonded: Cys65–Cys112 and Cys160–Cys169.

Belongs to the protease inhibitor I3 (leguminous Kunitz-type inhibitor) family. As to expression, seed, and at low levels in leaf, root, and stem.

Functionally, has probably no trypsin inhibitor activity. KTi2 is responsible for most of the Kunitz trypsin inhibitor activity and protein found in soybean seeds. The sequence is that of Kunitz-type trypsin inhibitor KTI2 (KTI2) from Glycine max (Soybean).